Reading from the N-terminus, the 267-residue chain is Tryptophan synthase alpha chain (267 aa).

Active-site proton acceptor residues include glutamate 49 and aspartate 60.

This sequence belongs to the TrpA family. As to quaternary structure, tetramer of two alpha and two beta chains.

It catalyses the reaction (1S,2R)-1-C-(indol-3-yl)glycerol 3-phosphate + L-serine = D-glyceraldehyde 3-phosphate + L-tryptophan + H2O. Its pathway is amino-acid biosynthesis; L-tryptophan biosynthesis; L-tryptophan from chorismate: step 5/5. Its function is as follows. The alpha subunit is responsible for the aldol cleavage of indoleglycerol phosphate to indole and glyceraldehyde 3-phosphate. This Salinispora arenicola (strain CNS-205) protein is Tryptophan synthase alpha chain.